Reading from the N-terminus, the 372-residue chain is Ca(2+)/H(+) antiporter (372 aa).

Transmembrane regions (helical) follow at residues 7–27, 29–49, 62–82, 94–114, 134–154, 162–182, 222–242, 251–271, 294–314, 320–340, and 352–372; these read IFLVLLVFCPLSFAAHWLGWG, TTVFILAGLAIVPLAAFMGTA, GGLLNATFGNATELILAYIAL, LTGSIIGNLLLVMGFAVFLGG, MNLGVVAILLPTALQYTSTGV, LSVAVAVVLIGVYLLSLVFSM, LWTGVLLVVTLGVAVESELLV, SLGLTALFTGVIVLPIIGNAA, GSSLQIAFFVAPVLVIVGWAI, LNFNPFELVAVLVAVLIVNSI, and ILLLATYAIVALAFFFHPTLV.

It belongs to the Ca(2+):cation antiporter (CaCA) (TC 2.A.19) family. Cation/proton exchanger (CAX) subfamily.

Its subcellular location is the cell inner membrane. Ca(+)/H(+) antiporter that extrudes calcium in exchange for external protons. Plays an important role in salt tolerance. Does not transport sodium or lithium. The chain is Ca(2+)/H(+) antiporter from Synechocystis sp. (strain ATCC 27184 / PCC 6803 / Kazusa).